The following is a 465-amino-acid chain: GTPase Der (465 aa).

EngA-type G domains are found at residues F3–Y166 and I184–N358. GTP is bound by residues G9–S16, D56–I60, N118–D121, G190–S197, D237–V241, and N302–D305. The 85-residue stretch at K359–E443 folds into the KH-like domain. Positions F446–K465 are disordered.

It belongs to the TRAFAC class TrmE-Era-EngA-EngB-Septin-like GTPase superfamily. EngA (Der) GTPase family. In terms of assembly, associates with the 50S ribosomal subunit.

Its function is as follows. GTPase that plays an essential role in the late steps of ribosome biogenesis. The chain is GTPase Der from Francisella tularensis subsp. holarctica (strain FTNF002-00 / FTA).